The chain runs to 468 residues: Cysteine--tRNA ligase (468 aa).

C27 provides a ligand contact to Zn(2+). The 'HIGH' region signature appears at 29-39 (PTVYNYFHIGN). 3 residues coordinate Zn(2+): C207, H232, and E236. The 'KMSKS' region signature appears at 264–268 (KMAKS). Residue K267 coordinates ATP.

The protein belongs to the class-I aminoacyl-tRNA synthetase family. In terms of assembly, monomer. Zn(2+) is required as a cofactor.

The protein resides in the cytoplasm. It carries out the reaction tRNA(Cys) + L-cysteine + ATP = L-cysteinyl-tRNA(Cys) + AMP + diphosphate. This is Cysteine--tRNA ligase from Acetivibrio thermocellus (strain ATCC 27405 / DSM 1237 / JCM 9322 / NBRC 103400 / NCIMB 10682 / NRRL B-4536 / VPI 7372) (Clostridium thermocellum).